Reading from the N-terminus, the 336-residue chain is GTPase Obg (336 aa).

The region spanning 1-159 (MKFLDETKVY…KTIWLRLKLI (159 aa)) is the Obg domain. Positions 160-327 (ADAGLVGLPN…ALRALRSVIA (168 aa)) constitute an OBG-type G domain. Residues 166 to 173 (GLPNAGKS), 191 to 195 (FTTLH), 212 to 215 (DIPG), 279 to 282 (SQID), and 308 to 310 (SAV) contribute to the GTP site. The Mg(2+) site is built by S173 and T193.

This sequence belongs to the TRAFAC class OBG-HflX-like GTPase superfamily. OBG GTPase family. In terms of assembly, monomer. Requires Mg(2+) as cofactor.

It localises to the cytoplasm. Its function is as follows. An essential GTPase which binds GTP, GDP and possibly (p)ppGpp with moderate affinity, with high nucleotide exchange rates and a fairly low GTP hydrolysis rate. Plays a role in control of the cell cycle, stress response, ribosome biogenesis and in those bacteria that undergo differentiation, in morphogenesis control. In Rhizobium meliloti (strain 1021) (Ensifer meliloti), this protein is GTPase Obg.